The primary structure comprises 397 residues: MSASFSPHTITLIKSTVPLLAEHGTTIIEAMYHRLFEDPQIEALFNQANQKNGTQIHALAGAILAYARNIDNPGVLASAIERIAQKHVGYAIHPEHYPHVATALLGAIKKVLGDVATSEVLEAWGEAYWFIANLLKDREAVIREGIMTKNGGWIHWRRFVISKRIPESETITSFMLHPEDGGPVVPHQAGQYLTFRFDAAGMPGMKRNYSISCGPNSDHYRITVKREHGTGASAFLHDQAKVGTIIECTPPVGDFFLPSVIERPIVLLSGGVGLTPMVSMMEQIAEAHPDAQVWYVHGTQNRETHAMDAHIRALVSRHKHMKATTFYTQRREADDAEAGFITIDWLRANTPFQKADFYLCGPRPFLRTFVRDLIGAGVPAVQVHYEFFGPMDEEMAA.

The region spanning 4–140 (SFSPHTITLI…IANLLKDREA (137 aa)) is the Globin domain. Histidine 87 contacts heme b. Active-site charge relay system residues include tyrosine 97 and glutamate 139. A reductase region spans residues 151–397 (GGWIHWRRFV…FGPMDEEMAA (247 aa)). An FAD-binding FR-type domain is found at 154–258 (IHWRRFVISK…TPPVGDFFLP (105 aa)). FAD is bound by residues tyrosine 192 and 207-210 (RNYS). NADP(+) is bound at residue 271–276 (GVGLTP). Position 387–390 (387–390 (FFGP)) interacts with FAD.

It belongs to the globin family. Two-domain flavohemoproteins subfamily. This sequence in the C-terminal section; belongs to the flavoprotein pyridine nucleotide cytochrome reductase family. It depends on heme b as a cofactor. FAD serves as cofactor.

It catalyses the reaction 2 nitric oxide + NADPH + 2 O2 = 2 nitrate + NADP(+) + H(+). It carries out the reaction 2 nitric oxide + NADH + 2 O2 = 2 nitrate + NAD(+) + H(+). Functionally, is involved in NO detoxification in an aerobic process, termed nitric oxide dioxygenase (NOD) reaction that utilizes O(2) and NAD(P)H to convert NO to nitrate, which protects the bacterium from various noxious nitrogen compounds. Therefore, plays a central role in the inducible response to nitrosative stress. This is Flavohemoprotein from Xylella fastidiosa (strain 9a5c).